Here is a 402-residue protein sequence, read N- to C-terminus: NADH dehydrogenase [ubiquinone] 1 alpha subcomplex subunit 9, mitochondrial (402 aa).

Residues Met-1–Tyr-43 constitute a mitochondrion transit peptide.

Belongs to the complex I NDUFA9 subunit family. As to quaternary structure, complex I is composed of at least 49 different subunits. This a component of the hydrophobic protein fraction. Requires FAD as cofactor.

The protein localises to the mitochondrion matrix. Its function is as follows. Accessory subunit of the mitochondrial membrane respiratory chain NADH dehydrogenase (Complex I), that is believed not to be involved in catalysis. Complex I functions in the transfer of electrons from NADH to the respiratory chain. The immediate electron acceptor for the enzyme is believed to be ubiquinone. This is NADH dehydrogenase [ubiquinone] 1 alpha subcomplex subunit 9, mitochondrial from Arabidopsis thaliana (Mouse-ear cress).